We begin with the raw amino-acid sequence, 281 residues long: MADLPPLREVIARHGLDARKSLGQHFLFDLNLTGRIARAAGDLTVGSVIEIGPGPGGLTRALLDAGARQVIAIERDDRAIAIQNEIAEAYPGRLEIMAADAMTVDAAELGEVPRRIVANLPYNISTALLLGWLRRADAFERLVLMFQKEVVDRLAAPPRSEHYGRLSVITQWRCEVRPLFNVDRRAFTPPPAVTSTVVDLIPRAEPLAPARFETLERVTAAAFGQRRKMLRSSLKSLGGAEDLLERTGILPTARAEEIPVEGFCALARALDARTLDGHQSA.

S-adenosyl-L-methionine is bound by residues His-25, Leu-27, Gly-52, Glu-74, Asp-100, and Asn-119.

Belongs to the class I-like SAM-binding methyltransferase superfamily. rRNA adenine N(6)-methyltransferase family. RsmA subfamily.

It is found in the cytoplasm. It carries out the reaction adenosine(1518)/adenosine(1519) in 16S rRNA + 4 S-adenosyl-L-methionine = N(6)-dimethyladenosine(1518)/N(6)-dimethyladenosine(1519) in 16S rRNA + 4 S-adenosyl-L-homocysteine + 4 H(+). Functionally, specifically dimethylates two adjacent adenosines (A1518 and A1519) in the loop of a conserved hairpin near the 3'-end of 16S rRNA in the 30S particle. May play a critical role in biogenesis of 30S subunits. The protein is Ribosomal RNA small subunit methyltransferase A of Paramagnetospirillum magneticum (strain ATCC 700264 / AMB-1) (Magnetospirillum magneticum).